Reading from the N-terminus, the 344-residue chain is E3 ubiquitin-protein ligase RING2-A (344 aa).

Positions 2–181 (ATPVNAQCSS…EDNCDSRSHV (180 aa)) are interaction with HIP2. The RING-type zinc-finger motif lies at 48 to 88 (CPICLDMLKNTMTTKECLHRFCSDCIVTALRSGNKECPTCR). The segment at 90-95 (KLVSKR) is interaction with nucleosomes via an acidic patch on histone H2A and histone H2B. A disordered region spans residues 148 to 230 (QAMHRAQRVR…DPPGGGETGS (83 aa)). Residues 180-192 (HVSNPSVHSNQEA) show a composition bias toward polar residues.

As to quaternary structure, component of chromatin-associated Polycomb (PcG) complexes. Component of a PRC1-like complex. Component of some MLL1/MLL complex.

Its subcellular location is the nucleus. It localises to the cytoplasm. It is found in the chromosome. It carries out the reaction S-ubiquitinyl-[E2 ubiquitin-conjugating enzyme]-L-cysteine + [acceptor protein]-L-lysine = [E2 ubiquitin-conjugating enzyme]-L-cysteine + N(6)-ubiquitinyl-[acceptor protein]-L-lysine.. Its pathway is protein modification; protein ubiquitination. Its function is as follows. E3 ubiquitin-protein ligase that mediates monoubiquitination of 'Lys-119' of histone H2A (H2AK119Ub), thereby playing a central role in histone code and gene regulation. H2AK119Ub gives a specific tag for epigenetic transcriptional repression. Essential component of a Polycomb group (PcG) multiprotein PRC1-like complex, a complex class required to maintain the transcriptionally repressive state of many genes, including Hox genes, throughout development. PcG PRC1 complex acts via chromatin remodeling and modification of histones, rendering chromatin heritably changed in its expressibility. The chain is E3 ubiquitin-protein ligase RING2-A (rnf2-a) from Xenopus laevis (African clawed frog).